A 1242-amino-acid chain; its full sequence is Myosin-16 (1242 aa).

In terms of domain architecture, Myosin N-terminal SH3-like spans 6-55 (MVDSHVWVEDPERAWIDGVVLNIKGEEAEIKTNDGRDVIANLSRLYPKDT). The 670-residue stretch at 60–729 (EGVEDMTRLS…QMAELDAHRT (670 aa)) folds into the Myosin motor domain. ATP is bound by residues 154–161 (GESGSGKT) and 207–215 (NNNSSRFGK). 4 actin-binding regions span residues 493–527 (LIEKKPGGIIALLDEACMLPKSTPETFSEKLYHTF), 529–552 (DHKRFMKPKLTRSDFTLVHYAGDV), 587–610 (FPPLPKESSKSKFSSIGARFKLQL), and 610–632 (LQQLMETLNSTEPHYIRCVKPNN). IQ domains lie at 732–761 (LGESARMIQGQVRTRLTRERFVLMRRASVN), 755–784 (MRRASVNIQANWRGNIARKISKEMRREEAA), 780–809 (REEAAIKIQKNLRRQIAKKDYGKTKSSALT), 803–832 (TKSSALTLQSGVRTMAARHEFRYKLTTRAA), 828–857 (TTRAATVIQAYWRGYSAISDYKKLKRVSLL), and 851–880 (LKRVSLLCKSNLRGRIARKQLGQSKQADRK). 2 disordered regions span residues 869–893 (KQLGQSKQADRKEETEKERKVELSN) and 908–1042 (EQSD…ERKT). A compositionally biased stretch (basic and acidic residues) spans 876–893 (QADRKEETEKERKVELSN). 6 tandem repeats follow at residues 876-908 (QADRKEETEKERKVELSNRAEEAVDMSFVLHSE), 909-940 (QSDDAESGHGRKAKLSIESEDGLDKSSVLHSE), 941-965 (QSDDEELGHERKTKLSIESEDGHSD), 966-997 (QSDDEEIEHERKTKHCIQAEDGIEKSYVMHSD), 998-1029 (QSDDEEIGHKRKTKHSIQAEDGIEKSFVVHSD), and 1030-1061 (QSDDEEIGHERKTKHAIQVEDGIQKSFVTCSE). Residues 876-1061 (QADRKEETEK…IQKSFVTCSE (186 aa)) are 6 X 33 AA repeats of Q-S-D-D-x-E-E-x(2)-H-x-R-K-x-K-x(2)-I-x(2)-E-D-G-x(3)-S-x-V-x-H-S-x. Basic and acidic residues predominate over residues 948–966 (GHERKTKLSIESEDGHSDQ). Residues 1079 to 1142 (DTEIESLTAE…QLQDSLNRLL (64 aa)) adopt a coiled-coil conformation. The interval 1175–1242 (DLADSSENSE…DKEGGFEDYF (68 aa)) is disordered. Residues 1179 to 1191 (SSENSEASSSDSD) show a composition bias toward low complexity. Polar residues predominate over residues 1199–1224 (PSSDNFSTFNPNQLQVIVQDLSTTEA). Residues 1225–1242 (KGTESYDSDKEGGFEDYF) show a composition bias toward basic and acidic residues.

Belongs to the TRAFAC class myosin-kinesin ATPase superfamily. Myosin family. Plant myosin class XI subfamily. Homodimer. As to expression, expressed in flowers and leaves.

It localises to the cytoplasm. Functionally, myosin heavy chain that is required for the cell cycle-regulated transport of various organelles and proteins for their segregation. Functions by binding with its tail domain to receptor proteins on organelles and exerting force with its N-terminal motor domain against actin filaments, thereby transporting its cargo along polarized actin cables. The chain is Myosin-16 (XI-J) from Arabidopsis thaliana (Mouse-ear cress).